The sequence spans 451 residues: UPF0210 protein CLL_A1718 (451 aa).

Belongs to the UPF0210 family. Homodimer.

The chain is UPF0210 protein CLL_A1718 from Clostridium botulinum (strain Eklund 17B / Type B).